We begin with the raw amino-acid sequence, 466 residues long: MRSAWIEKRRGSANVSQLHYARQGVVTEEMAYVAKRENLPESLVMEEVARGRMIIPANINHANLEPMAIGIASKCKVNANIGASPNASDASEEVKKLELAVKYGADTVMDLSTGGVNLDEVRTAIINASPVPIGTVPVYQALESVHGSIERLSEDDFLHIIEKHCQQGVDYQTIHAGLLIEHLPKVKGRLTGIVSRGGGILAQWMLYHHKQNPLYTRFEDICEIFKRYDCTFSLGDSLRPGCQHDASDDAQLAELKTLGELTRRAWKHDVQVMVEGPGHVPMDQIEFNVKKQMEECSEAPFYVLGPLVTDIAPGYDHITSAIGAAMAGWHGTAMLCYVTPKEHLGLPNADDVREGLIAYKIAAHAADIARHRPGARDRDDELSRARYAFDWNKQFELSLDPERAKEYHDETLPADIYKQAEFCSMCGPKHCPMQTKITDKDLESLEEVLKAKGGAELSTAKLDRAD.

Substrate is bound by residues N80, M109, Y139, H175, 195 to 197 (SRG), 236 to 239 (DSLR), and E275. H279 contributes to the Zn(2+) binding site. Position 302 (Y302) interacts with substrate. H343 is a binding site for Zn(2+). [4Fe-4S] cluster contacts are provided by C423, C426, and C431.

It belongs to the ThiC family. Requires [4Fe-4S] cluster as cofactor.

The enzyme catalyses 5-amino-1-(5-phospho-beta-D-ribosyl)imidazole + S-adenosyl-L-methionine = 4-amino-2-methyl-5-(phosphooxymethyl)pyrimidine + CO + 5'-deoxyadenosine + formate + L-methionine + 3 H(+). It functions in the pathway cofactor biosynthesis; thiamine diphosphate biosynthesis. Catalyzes the synthesis of the hydroxymethylpyrimidine phosphate (HMP-P) moiety of thiamine from aminoimidazole ribotide (AIR) in a radical S-adenosyl-L-methionine (SAM)-dependent reaction. This Synechococcus sp. (strain RCC307) protein is Phosphomethylpyrimidine synthase.